The following is a 214-amino-acid chain: Riboflavin kinase (214 aa).

The tract at residues 1–26 (MRPDGPRDPVVGPDSGPEPPYPVRLS) is disordered. Mg(2+) contacts are provided by T44 and N46. The Nucleophile role is filled by E112.

This sequence belongs to the flavokinase family. Requires Zn(2+) as cofactor. The cofactor is Mg(2+).

The enzyme catalyses riboflavin + ATP = FMN + ADP + H(+). It participates in cofactor biosynthesis; FMN biosynthesis; FMN from riboflavin (ATP route): step 1/1. Functionally, catalyzes the phosphorylation of riboflavin (vitamin B2) to form flavin mononucleotide (FMN) coenzyme. In Aspergillus clavatus (strain ATCC 1007 / CBS 513.65 / DSM 816 / NCTC 3887 / NRRL 1 / QM 1276 / 107), this protein is Riboflavin kinase (fmn1).